We begin with the raw amino-acid sequence, 203 residues long: Thymidylate kinase (203 aa).

ATP is bound at residue 10–17 (GIDGSGKS).

This sequence belongs to the thymidylate kinase family.

It catalyses the reaction dTMP + ATP = dTDP + ADP. Phosphorylation of dTMP to form dTDP in both de novo and salvage pathways of dTTP synthesis. The polypeptide is Thymidylate kinase (Brachyspira hyodysenteriae (strain ATCC 49526 / WA1)).